The following is a 213-amino-acid chain: Orotate phosphoribosyltransferase (213 aa).

Position 26 (Lys-26) interacts with 5-phospho-alpha-D-ribose 1-diphosphate. 34 to 35 (FF) contributes to the orotate binding site. Residues 72 to 73 (YK), Arg-99, Lys-100, Lys-103, His-105, and 124 to 132 (DDVITAGTA) each bind 5-phospho-alpha-D-ribose 1-diphosphate. The orotate site is built by Thr-128 and Arg-156.

The protein belongs to the purine/pyrimidine phosphoribosyltransferase family. PyrE subfamily. Homodimer. Mg(2+) is required as a cofactor.

It carries out the reaction orotidine 5'-phosphate + diphosphate = orotate + 5-phospho-alpha-D-ribose 1-diphosphate. The protein operates within pyrimidine metabolism; UMP biosynthesis via de novo pathway; UMP from orotate: step 1/2. Functionally, catalyzes the transfer of a ribosyl phosphate group from 5-phosphoribose 1-diphosphate to orotate, leading to the formation of orotidine monophosphate (OMP). In Pseudomonas putida (strain W619), this protein is Orotate phosphoribosyltransferase.